The primary structure comprises 288 residues: MKFLLAFSLLIPSVVFASSSKFQQVEQDVKAIEVSLSARIGVSVLDTQNGEYWDYNGNQRFPLTSTFKTIACAKLLYDAEQGKVNPNSTVEIKKADLVTYSPVIEKQVGQAITLDDACFATMTTSDNTAANIILSAVGGPKGVTDFLRQIGDKETRLDRIEPDLNEGKLGDLRDTTTPKAIASTLNKLLFGSALSEMNQKKLESWMVNNQVTGNLLRSVLPAGWNIADRSGAGGFGARSITAVVWSEHQAPIIVSIYLAQTQASMAERNDAIVKIGHSIFDVYTSQSR.

The signal sequence occupies residues 1-17; sequence MKFLLAFSLLIPSVVFA. Catalysis depends on serine 65, which acts as the Acyl-ester intermediate. A disulfide bond links cysteine 72 and cysteine 118. Residue 229–231 participates in substrate binding; the sequence is RSG.

It belongs to the class-A beta-lactamase family.

It carries out the reaction a beta-lactam + H2O = a substituted beta-amino acid. Hydrolyzes both carbenicillin and oxacillin. The chain is Beta-lactamase CARB-3 (carB3) from Pseudomonas aeruginosa.